A 468-amino-acid chain; its full sequence is Secretogranin-3 (468 aa).

The first 19 residues, 1-19 (MGFLGTGTWILVLVLPIQA), serve as a signal peptide directing secretion. The segment at 23 to 69 (PGGSQDKSLHNRELSAERPLNEQIAEAEEDKIKKTYPPENKPGQSNY) is disordered. A compositionally biased stretch (basic and acidic residues) spans 29-42 (KSLHNRELSAERPL). S37 is modified (phosphoserine). S37 carries an O-linked (Xyl...) (chondroitin sulfate) serine glycan. T216 and T231 each carry an O-linked (GalNAc...) threonine glycan. The tract at residues 353-406 (KLFPAPSEKSHEETDSTKEEAAKMEKEYGSLKDSTKDDNSNPGGKTDEPKGKTE) is disordered. O-linked (GalNAc...) serine glycosylation occurs at S359. Residues 360 to 406 (EKSHEETDSTKEEAAKMEKEYGSLKDSTKDDNSNPGGKTDEPKGKTE) show a composition bias toward basic and acidic residues. A Phosphoserine modification is found at S362.

As to quaternary structure, interacts with CHGA. Interacts with secretogranin II/SCG2. Interacts (via C-terminus) with CPE. O-glycosylated. Detected in urine (at protein level). Expressed in brain, heart, kidney, liver and skeletal muscle.

It is found in the cytoplasmic vesicle. The protein localises to the secretory vesicle. Its subcellular location is the secretory vesicle membrane. It localises to the secreted. In terms of biological role, member of the granin protein family that regulates the biogenesis of secretory granules. Acts as a sorting receptor for intragranular proteins including chromogranin A/CHGA. May also play a role in angiogenesis. Promotes endothelial proliferation, migration and tube formation through MEK/ERK signaling pathway. The protein is Secretogranin-3 (SCG3) of Homo sapiens (Human).